A 501-amino-acid chain; its full sequence is Glycerol kinase (501 aa).

T17 lines the ADP pocket. ATP-binding residues include T17, T18, and S19. Residue T17 coordinates sn-glycerol 3-phosphate. R21 lines the ADP pocket. Sn-glycerol 3-phosphate contacts are provided by R87, E88, Y139, and D243. Positions 87, 88, 139, 243, and 244 each coordinate glycerol. 2 residues coordinate ADP: T265 and G308. ATP-binding residues include T265, G308, Q312, and G409. ADP-binding residues include G409 and N413.

This sequence belongs to the FGGY kinase family.

The catalysed reaction is glycerol + ATP = sn-glycerol 3-phosphate + ADP + H(+). It participates in polyol metabolism; glycerol degradation via glycerol kinase pathway; sn-glycerol 3-phosphate from glycerol: step 1/1. Inhibited by fructose 1,6-bisphosphate (FBP). Key enzyme in the regulation of glycerol uptake and metabolism. Catalyzes the phosphorylation of glycerol to yield sn-glycerol 3-phosphate. The chain is Glycerol kinase from Pseudomonas syringae pv. syringae (strain B728a).